The primary structure comprises 154 residues: Myoglobin (154 aa).

The Globin domain occupies 2–148 (GLSDGEWQLV…FRNDMAAQYK (147 aa)). Ser4 bears the Phosphoserine mark. His65 provides a ligand contact to nitrite. His65 contacts O2. Position 68 is a phosphothreonine (Thr68). His94 contributes to the heme b binding site.

It belongs to the globin family. In terms of assembly, monomeric.

It localises to the cytoplasm. It is found in the sarcoplasm. The enzyme catalyses Fe(III)-heme b-[protein] + nitric oxide + H2O = Fe(II)-heme b-[protein] + nitrite + 2 H(+). It catalyses the reaction H2O2 + AH2 = A + 2 H2O. Functionally, monomeric heme protein which primary function is to store oxygen and facilitate its diffusion within muscle tissues. Reversibly binds oxygen through a pentacoordinated heme iron and enables its timely and efficient release as needed during periods of heightened demand. Depending on the oxidative conditions of tissues and cells, and in addition to its ability to bind oxygen, it also has a nitrite reductase activity whereby it regulates the production of bioactive nitric oxide. Under stress conditions, like hypoxia and anoxia, it also protects cells against reactive oxygen species thanks to its pseudoperoxidase activity. This chain is Myoglobin (MB), found in Bos mutus grunniens (Wild yak).